A 362-amino-acid polypeptide reads, in one-letter code: S-adenosylmethionine:tRNA ribosyltransferase-isomerase (362 aa).

The protein belongs to the QueA family. Monomer.

The protein resides in the cytoplasm. It catalyses the reaction 7-aminomethyl-7-carbaguanosine(34) in tRNA + S-adenosyl-L-methionine = epoxyqueuosine(34) in tRNA + adenine + L-methionine + 2 H(+). It functions in the pathway tRNA modification; tRNA-queuosine biosynthesis. Functionally, transfers and isomerizes the ribose moiety from AdoMet to the 7-aminomethyl group of 7-deazaguanine (preQ1-tRNA) to give epoxyqueuosine (oQ-tRNA). The chain is S-adenosylmethionine:tRNA ribosyltransferase-isomerase from Syntrophus aciditrophicus (strain SB).